Reading from the N-terminus, the 204-residue chain is Ribonuclease HII (204 aa).

The RNase H type-2 domain maps to 17–204; that stretch reads TLIAGVDEVG…KPVKKVLGLL (188 aa). A divalent metal cation contacts are provided by D23, E24, and D115.

The protein belongs to the RNase HII family. The cofactor is Mn(2+). Mg(2+) is required as a cofactor.

It localises to the cytoplasm. The catalysed reaction is Endonucleolytic cleavage to 5'-phosphomonoester.. Its function is as follows. Endonuclease that specifically degrades the RNA of RNA-DNA hybrids. This is Ribonuclease HII from Psychromonas ingrahamii (strain DSM 17664 / CCUG 51855 / 37).